We begin with the raw amino-acid sequence, 262 residues long: MAVTAQAARRKERVLCLFDVDGTLTPARQKIDPEVAAFLQKLRSRVQIGVVGGSDYCKIAEQLGDGDEVIEKFDYVFAENGTVQYKHGRLLSKQTIQNHLGEELLQDLINFCLSYMALLRLPKKRGTFIEFRNGMLNISPIGRSCTLEERIEFSELDKKEKIREKFVEALKTEFAGKGLRFSRGGMISFDVFPEGWDKRYCLDSLDQDSFDTIHFFGNETSPGGNDFEIFADPRTVGHSVVSPQDTVQRCREIFFPETAHEA.

A2 carries the post-translational modification N-acetylalanine. D19 serves as the catalytic Nucleophile. 2 residues coordinate Mg(2+): D19 and D21. Catalysis depends on D21, which acts as the Proton donor/acceptor. Residues R28, R132, R143, R150, M186, S188, and D190 each coordinate alpha-D-mannose 1-phosphate. 4 residues coordinate Mg(2+): N218, F230, D232, and T235. S242 is subject to Phosphoserine.

It belongs to the eukaryotic PMM family. Homodimer. It depends on Mg(2+) as a cofactor. In terms of tissue distribution, strong expression in liver, heart, brain, and pancreas; lower expression in skeletal muscle.

Its subcellular location is the cytoplasm. It catalyses the reaction alpha-D-mannose 1-phosphate = D-mannose 6-phosphate. It participates in nucleotide-sugar biosynthesis; GDP-alpha-D-mannose biosynthesis; alpha-D-mannose 1-phosphate from D-fructose 6-phosphate: step 2/2. IMP, a metabolite whose concentration is elevated in anoxia, inhibits phosphomannomutase and phosphoglucomutase activities and strongly enhances glucose-1,6-bisphosphatase activity. Functionally, involved in the synthesis of the GDP-mannose and dolichol-phosphate-mannose required for a number of critical mannosyl transfer reactions. In addition, may be responsible for the degradation of glucose-1,6-bisphosphate in ischemic brain. The polypeptide is Phosphomannomutase 1 (PMM1) (Homo sapiens (Human)).